Reading from the N-terminus, the 334-residue chain is Protein-methionine-sulfoxide reductase catalytic subunit MsrP (334 aa).

The tat-type signal signal peptide spans 1 to 44 (MKKNQFLKESDVTAESVFFMKRRQVLKALGISAAALSLPHAAHA). Mo-molybdopterin is bound by residues N88, 91–92 (YE), C146, T181, N233, R238, and 249–251 (GIK).

It belongs to the MsrP family. As to quaternary structure, heterodimer of a catalytic subunit (MsrP) and a heme-binding subunit (MsrQ). Requires Mo-molybdopterin as cofactor. In terms of processing, predicted to be exported by the Tat system. The position of the signal peptide cleavage has not been experimentally proven.

The protein resides in the periplasm. The enzyme catalyses L-methionyl-[protein] + a quinone + H2O = L-methionyl-(S)-S-oxide-[protein] + a quinol. The catalysed reaction is L-methionyl-[protein] + a quinone + H2O = L-methionyl-(R)-S-oxide-[protein] + a quinol. Part of the MsrPQ system that repairs oxidized periplasmic proteins containing methionine sulfoxide residues (Met-O), using respiratory chain electrons. Thus protects these proteins from oxidative-stress damage caused by reactive species of oxygen and chlorine generated by the host defense mechanisms. MsrPQ is essential for the maintenance of envelope integrity under bleach stress, rescuing a wide series of structurally unrelated periplasmic proteins from methionine oxidation, including the primary periplasmic chaperone SurA and the lipoprotein Pal. The catalytic subunit MsrP is non-stereospecific, being able to reduce both (R-) and (S-) diastereoisomers of methionine sulfoxide. In Escherichia coli (strain UTI89 / UPEC), this protein is Protein-methionine-sulfoxide reductase catalytic subunit MsrP.